The following is a 427-amino-acid chain: Glutamate-1-semialdehyde 2,1-aminomutase (427 aa).

Lys265 is modified (N6-(pyridoxal phosphate)lysine).

It belongs to the class-III pyridoxal-phosphate-dependent aminotransferase family. HemL subfamily. Homodimer. Requires pyridoxal 5'-phosphate as cofactor.

The protein resides in the cytoplasm. It carries out the reaction (S)-4-amino-5-oxopentanoate = 5-aminolevulinate. Its pathway is porphyrin-containing compound metabolism; protoporphyrin-IX biosynthesis; 5-aminolevulinate from L-glutamyl-tRNA(Glu): step 2/2. In Pasteurella multocida (strain Pm70), this protein is Glutamate-1-semialdehyde 2,1-aminomutase.